Consider the following 492-residue polypeptide: Zinc finger protein GLIS2 (492 aa).

The disordered stretch occupies residues 49–101 (VITPICSSPPPGFRYRDGDSPPFSSPPIVDLSLSPPSGTDSPSRSSLSPDRAA). Residues 69–129 (PPFSSPPIVD…SPFQFFLPLG (61 aa)) are transcription activation. Low complexity predominate over residues 82–97 (SPPSGTDSPSRSSLSP). The tract at residues 138-161 (MFMSPPKENRLSLEFTEQKQLVCQ) is transcription repression. The segment at 158–183 (LVCQWAKCNRLFELLQELVDHVNDFH) adopts a C2H2-type 1 zinc-finger fold. Residues 192 to 219 (YCCHWEGCARRGRGFNARYKMLIHIRTH) form a C2H2-type 2; degenerate zinc finger. 3 C2H2-type zinc fingers span residues 225–247 (HCCP…NRSH), 253–277 (YMCP…TRTH), and 283–307 (YYCK…IKAH). Positions 423-444 (VENEKRPKGQRGDSSERTDGSK) are enriched in basic and acidic residues. Positions 423–450 (VENEKRPKGQRGDSSERTDGSKLRPGSI) are disordered.

This sequence belongs to the GLI C2H2-type zinc-finger protein family.

The protein localises to the nucleus speckle. It localises to the cytoplasm. Its function is as follows. Can act either as a transcription repressor or as a transcription activator, depending on the cell context. May be involved in neuron differentiation. The chain is Zinc finger protein GLIS2 (glis2) from Xenopus laevis (African clawed frog).